The following is a 406-amino-acid chain: Peptidase T (406 aa).

His-80 is a binding site for Zn(2+). Asp-82 is a catalytic residue. Residue Asp-141 participates in Zn(2+) binding. Glu-175 (proton acceptor) is an active-site residue. Positions 176, 198, and 380 each coordinate Zn(2+).

This sequence belongs to the peptidase M20B family. The cofactor is Zn(2+).

It localises to the cytoplasm. The enzyme catalyses Release of the N-terminal residue from a tripeptide.. Functionally, cleaves the N-terminal amino acid of tripeptides. This chain is Peptidase T, found in Streptococcus mutans serotype c (strain ATCC 700610 / UA159).